The following is a 310-amino-acid chain: MGALGLQGRGGRPQGTGCLLLAVAGATSLVTLLLAVPITVLAVLALVPQEQGGLVMESAGLGAQAQQGLSKSNGLPSRLHSQIPSSSKNPFLRPGALSSHGKHPWVATLPPIVASTPVPGFQQLQEEKPETDLSSRLPAAHLIGAWMKGQGLSWEAKKEEAFLRSGTQFSGAEGLALPQDGLYYLYCNVGYRGRAPPSGAGPQDRSVTLRSSLYRAGGAYGRGAPELLLEGAETVTPVLDRAGRPQYRPLWYTSVGFGGLVQLRRGERVYVNISHPDMVDYRRGKTFFGAVMVGLVPSASLGKCLHSANV.

The Cytoplasmic segment spans residues 1–27; that stretch reads MGALGLQGRGGRPQGTGCLLLAVAGAT. A helical; Signal-anchor for type II membrane protein membrane pass occupies residues 28–48; the sequence is SLVTLLLAVPITVLAVLALVP. Residues 49-310 lie on the Extracellular side of the membrane; it reads QEQGGLVMES…LGKCLHSANV (262 aa). Positions 67-86 are disordered; sequence QGLSKSNGLPSRLHSQIPSS. A THD domain is found at 138–293; it reads PAAHLIGAWM…GKTFFGAVMV (156 aa). Asn-272 is a glycosylation site (N-linked (GlcNAc...) asparagine).

The protein belongs to the tumor necrosis factor family. Heterotrimer of either two LTB and one LTA subunits or (less prevalent) two LTA and one LTB subunits.

The protein localises to the membrane. Its function is as follows. Cytokine that binds to LTBR/TNFRSF3. May play a specific role in immune response regulation. Provides the membrane anchor for the attachment of the heterotrimeric complex to the cell surface. The sequence is that of Lymphotoxin-beta (LTB) from Marmota monax (Woodchuck).